Here is a 152-residue protein sequence, read N- to C-terminus: 3-hydroxyacyl-[acyl-carrier-protein] dehydratase FabZ (152 aa).

The active site involves histidine 57.

The protein belongs to the thioester dehydratase family. FabZ subfamily.

It localises to the cytoplasm. The catalysed reaction is a (3R)-hydroxyacyl-[ACP] = a (2E)-enoyl-[ACP] + H2O. In terms of biological role, involved in unsaturated fatty acids biosynthesis. Catalyzes the dehydration of short chain beta-hydroxyacyl-ACPs and long chain saturated and unsaturated beta-hydroxyacyl-ACPs. The chain is 3-hydroxyacyl-[acyl-carrier-protein] dehydratase FabZ from Bradyrhizobium sp. (strain ORS 278).